A 130-amino-acid chain; its full sequence is Small ribosomal subunit protein uS8 (130 aa).

N6-succinyllysine is present on lysine 88.

It belongs to the universal ribosomal protein uS8 family. As to quaternary structure, component of the small ribosomal subunit. Part of the small subunit (SSU) processome, composed of more than 70 proteins and the RNA chaperone small nucleolar RNA (snoRNA) U3.

The protein resides in the cytoplasm. The protein localises to the nucleus. It is found in the nucleolus. Component of the small ribosomal subunit. The ribosome is a large ribonucleoprotein complex responsible for the synthesis of proteins in the cell. Part of the small subunit (SSU) processome, first precursor of the small eukaryotic ribosomal subunit. During the assembly of the SSU processome in the nucleolus, many ribosome biogenesis factors, an RNA chaperone and ribosomal proteins associate with the nascent pre-rRNA and work in concert to generate RNA folding, modifications, rearrangements and cleavage as well as targeted degradation of pre-ribosomal RNA by the RNA exosome. Required for proper erythropoiesis. This Mus musculus (Mouse) protein is Small ribosomal subunit protein uS8 (Rps15a).